The following is a 203-amino-acid chain: Small ribosomal subunit protein uS4c (203 aa).

One can recognise an S4 RNA-binding domain in the interval 91–154 (MRLDNIIFRL…KYESIISKNI (64 aa)).

Belongs to the universal ribosomal protein uS4 family. As to quaternary structure, part of the 30S ribosomal subunit. Contacts protein S5. The interaction surface between S4 and S5 is involved in control of translational fidelity.

Its subcellular location is the plastid. The protein localises to the chloroplast. In terms of biological role, one of the primary rRNA binding proteins, it binds directly to 16S rRNA where it nucleates assembly of the body of the 30S subunit. Its function is as follows. With S5 and S12 plays an important role in translational accuracy. The polypeptide is Small ribosomal subunit protein uS4c (rps4) (Lopidium struthiopteris (Moss)).